The sequence spans 573 residues: MKGFLLLSLSLLLVTVGSSSQASSTTSSSGGTSPPTTVQSQSPGSSSQASTTTSSSGGASPPTTVQSQSPGSSSQASTTTSSSGGASPPTTVQSQSPGSSSQASTTTSSSGGASPPTTVQSQSPGSSSQASTTTSSSGGASPPTTVQSQSPGSSSQASTTTSSSGGASPPTTVQSQSPGSSSQVSTTTSSSGGASPPTTVQSQSPGSSSQPGPTQPSGGASSSTVPSGGSTGPSDLCNPNPCKGTASCVKLHSKHFCLCLEGYYYNSSLSSCVKGTTFPGDISMSVSETANLEDENSVGYQELYNSVTDFFETTFNKTDYGQTVIIKVSTAPSRSARSAMRDATKDVSVSVVNIFGADTKETEKSVSSAIETAIKTSGNVKDYVSINLCDHYGCVGNDSSKCQDILQCTCKPGLDRLNPQVPFCVAVTCSQPCNAEEKEQCLKMDNGVMDCVCMPGYQRANGNRKCEECPFGYSGMNCKDQFQLILTIVGTIAGALILILLIAFIVSARSKNKKKDGEEQRLIEDDFHNLRLRQTGFSNLGADNSIFPKVRTGVPSQTPNPYANQRSMPRPDY.

The signal sequence occupies residues 1–17 (MKGFLLLSLSLLLVTVG). The span at 16-234 (VGSSSQASST…VPSGGSTGPS (219 aa)) shows a compositional bias: low complexity. Residues 16-237 (VGSSSQASST…GGSTGPSDLC (222 aa)) are disordered. Residues 18 to 480 (SSSQASSTTS…FGYSGMNCKD (463 aa)) are Extracellular-facing. The EGF-like 1 domain occupies 233 to 273 (PSDLCNPNPCKGTASCVKLHSKHFCLCLEGYYYNSSLSSCV). Intrachain disulfides connect Cys237–Cys248, Cys242–Cys257, and Cys259–Cys272. N-linked (GlcNAc...) asparagine glycosylation is found at Asn266, Asn316, and Asn397. Residues 274–391 (KGTTFPGDIS…DYVSINLCDH (118 aa)) form the SEA domain. 2 EGF-like domains span residues 385–425 (SINL…PFCV) and 425–467 (VAVT…RKCE). Intrachain disulfides connect Cys389/Cys402, Cys394/Cys408, Cys410/Cys424, Cys429/Cys441, Cys433/Cys451, and Cys453/Cys466. The chain crosses the membrane as a helical span at residues 481–508 (QFQLILTIVGTIAGALILILLIAFIVSA). Residues 509-573 (RSKNKKKDGE…NQRSMPRPDY (65 aa)) are Cytoplasmic-facing. The interval 548-573 (PKVRTGVPSQTPNPYANQRSMPRPDY) is disordered. The span at 554–567 (VPSQTPNPYANQRS) shows a compositional bias: polar residues.

In terms of assembly, homodimer of beta subunits. In terms of processing, cleaved into two subunits, alpha and beta, probably between the first EGF domain and the SEA domain. Beta subunit contains the cytoplasmic tail and alpha subunit the extracellular tail. The homooligomerization into dimers is dependent on intrachain disulfide bonds. Highly N-glycosylated.

The protein resides in the cell membrane. Its subcellular location is the secreted. Epithelial and hemopoietic transmembrane mucin that may play a role in cell signaling. The polypeptide is Mucin-13 (Muc13) (Mus musculus (Mouse)).